We begin with the raw amino-acid sequence, 63 residues long: Probable rubredoxin (63 aa).

In terms of domain architecture, Rubredoxin-like spans M11–L62. 4 residues coordinate Fe cation: C16, C19, C49, and C52.

It belongs to the rubredoxin family. Requires Fe(3+) as cofactor.

In terms of biological role, rubredoxin is a small nonheme, iron protein lacking acid-labile sulfide. Its single Fe, chelated to 4 Cys, functions as an electron acceptor and may also stabilize the conformation of the molecule. The polypeptide is Probable rubredoxin (Methanothermobacter thermautotrophicus (strain ATCC 29096 / DSM 1053 / JCM 10044 / NBRC 100330 / Delta H) (Methanobacterium thermoautotrophicum)).